The chain runs to 198 residues: Beta-crystallin A1 (198 aa).

Residues methionine 1–proline 13 form an N-terminal arm region. Beta/gamma crystallin 'Greek key' domains follow at residues tryptophan 14–cysteine 53 and glycine 54–cysteine 100. The tract at residues serine 101 to glutamate 106 is connecting peptide. Beta/gamma crystallin 'Greek key' domains follow at residues serine 107–cysteine 148 and glycine 149–glutamine 197.

It belongs to the beta/gamma-crystallin family. In terms of assembly, homo/heterodimer, or complexes of higher-order. The structure of beta-crystallin oligomers seems to be stabilized through interactions between the N-terminal arms.

Its function is as follows. Crystallins are the dominant structural components of the vertebrate eye lens. The sequence is that of Beta-crystallin A1 from Rana temporaria (European common frog).